We begin with the raw amino-acid sequence, 663 residues long: Alcohol oxidase 1 (663 aa).

8 to 38 (DILVLGGGSSGSCIAGRLANLDHSLKVGLIE) contributes to the FAD binding site. The Proton acceptor role is filled by His-567. Positions 661–663 (ARF) match the Microbody targeting signal motif.

Belongs to the GMC oxidoreductase family. As to quaternary structure, homooctamer. Requires FAD as cofactor.

The protein localises to the peroxisome matrix. The catalysed reaction is a primary alcohol + O2 = an aldehyde + H2O2. Its pathway is energy metabolism; methane degradation. Its function is as follows. Major isoform of alcohol oxidase, which catalyzes the oxidation of methanol to formaldehyde and hydrogen peroxide, the first step in the methanol utilization pathway of methylotrophic yeasts. This chain is Alcohol oxidase 1 (AOX1), found in Komagataella phaffii (strain ATCC 76273 / CBS 7435 / CECT 11047 / NRRL Y-11430 / Wegner 21-1) (Yeast).